We begin with the raw amino-acid sequence, 299 residues long: 33 kDa chaperonin (299 aa).

Cystine bridges form between C239-C241 and C272-C275.

The protein belongs to the HSP33 family. In terms of processing, under oxidizing conditions two disulfide bonds are formed involving the reactive cysteines. Under reducing conditions zinc is bound to the reactive cysteines and the protein is inactive.

The protein localises to the cytoplasm. Its function is as follows. Redox regulated molecular chaperone. Protects both thermally unfolding and oxidatively damaged proteins from irreversible aggregation. Plays an important role in the bacterial defense system toward oxidative stress. The chain is 33 kDa chaperonin from Acaryochloris marina (strain MBIC 11017).